A 138-amino-acid polypeptide reads, in one-letter code: Actin-related protein 2/3 complex subunit 5 (138 aa).

Residues 1–21 (MNYEDDNVESGQAGKSDAEYK) are disordered.

It belongs to the ARPC5 family. Component of the Arp2/3 complex composed of arpB/Arp2, arpC/Arp3, arcA/p41-arc, arcB/p34-arc, arcC/p21-arc, arcD/p20-arc and arcE/p16-arc. Interacts with carmil (via the region between the LRR domain and COOH-terminal proline-rich domain); carmil is required for Arp2/3-dependent actin nucleation. Arp2/3 complex, MyoB, MyoC, and the alpha and beta subunits of capping protein all form a larger complex with carmil.

It localises to the cytoplasm. Its subcellular location is the cytoskeleton. The protein resides in the cytosol. The protein localises to the cell cortex. It is found in the cell projection. It localises to the pseudopodium. Functionally, functions as a component of the Arp2/3 complex which is involved in regulation of actin polymerization and together with an activating nucleation-promoting factor (NPF) mediates the formation of branched actin networks. Seems to contact the pointed end of the daughter actin filament. The Arp2/3 complex is involved in organizing the actin system in cell motility and chemotaxis, in phagocytosis and macropinocytosis, at late steps of endosome processing, and in mitosis. In concert with a group of other proteins, the Arp2/3 complex plays a general role in the rapid activation and adaptation of the actin system to its multiple functions. This is Actin-related protein 2/3 complex subunit 5 (arcE) from Dictyostelium discoideum (Social amoeba).